The primary structure comprises 445 residues: Nuclear envelope integral membrane protein 1 (445 aa).

A signal peptide spans 1-44; it reads MAGGMKVAVLPAVGAGPWSWGAGGCGAVRLLLVLFGCFVCGSAG. Residue Asn125 is glycosylated (N-linked (GlcNAc...) asparagine). Transmembrane regions (helical) follow at residues 161–181, 186–206, 216–236, 245–265, and 289–309; these read PKLF…DLLS, FYYS…IIFI, PIYI…QLVF, CYWQ…FAVC, and LCFM…VVIA. An a; required for its colocalization with lamins at the nuclear envelope region spans residues 186–297; the sequence is FYYSTGMSVG…GLCFMYSSIQ (112 aa). Residues 336–405 are b; required for interaction with RAN-GTP; the sequence is TVPPRLLTEE…LTPNEVSVHE (70 aa). Residues 336–445 are required for nuclear localization; the sequence is TVPPRLLTEE…LVVQQNSFLT (110 aa). Ser368, Ser424, and Ser425 each carry phosphoserine. The span at 418-430 shows a compositional bias: acidic residues; that stretch reads ELSEETSSEEEDS. Positions 418–445 are disordered; it reads ELSEETSSEEEDSDSRYPLVVQQNSFLT.

This sequence belongs to the NEMP family. Homooligomer. Interacts with RAN-GTP. Interacts with EMD. Phosphorylation may regulate its interaction with RAN-GTP.

The protein localises to the nucleus inner membrane. Its subcellular location is the nucleus envelope. Functionally, together with EMD, contributes to nuclear envelope stiffness in germ cells. Required for female fertility. Essential for normal erythropoiesis. Required for efficient nuclear envelope opening and enucleation during the late stages of erythroblast maturation. The polypeptide is Nuclear envelope integral membrane protein 1 (NEMP1) (Bos taurus (Bovine)).